A 354-amino-acid polypeptide reads, in one-letter code: Methylthioribose-1-phosphate isomerase (354 aa).

Substrate-binding positions include 58–60 (RGA), Arg-101, and Gln-204. Asp-245 serves as the catalytic Proton donor. Residue 255–256 (NK) participates in substrate binding.

This sequence belongs to the eIF-2B alpha/beta/delta subunits family. MtnA subfamily.

It catalyses the reaction 5-(methylsulfanyl)-alpha-D-ribose 1-phosphate = 5-(methylsulfanyl)-D-ribulose 1-phosphate. The protein operates within amino-acid biosynthesis; L-methionine biosynthesis via salvage pathway; L-methionine from S-methyl-5-thio-alpha-D-ribose 1-phosphate: step 1/6. Functionally, catalyzes the interconversion of methylthioribose-1-phosphate (MTR-1-P) into methylthioribulose-1-phosphate (MTRu-1-P). The polypeptide is Methylthioribose-1-phosphate isomerase (Xanthomonas euvesicatoria pv. vesicatoria (strain 85-10) (Xanthomonas campestris pv. vesicatoria)).